The chain runs to 354 residues: Methionine import ATP-binding protein MetN (354 aa).

The ABC transporter domain occupies 8–250 (LDHIDITFRQ…PKEALTQKFI (243 aa)). ATP is bound at residue 42-49 (GYSGAGKS).

This sequence belongs to the ABC transporter superfamily. Methionine importer (TC 3.A.1.24) family. In terms of assembly, the complex is composed of two ATP-binding proteins (MetN), two transmembrane proteins (MetI) and a solute-binding protein (MetQ).

The protein resides in the cell membrane. The catalysed reaction is L-methionine(out) + ATP + H2O = L-methionine(in) + ADP + phosphate + H(+). The enzyme catalyses D-methionine(out) + ATP + H2O = D-methionine(in) + ADP + phosphate + H(+). In terms of biological role, part of the ABC transporter complex MetNIQ involved in methionine import. Responsible for energy coupling to the transport system. This chain is Methionine import ATP-binding protein MetN, found in Streptococcus pyogenes serotype M18 (strain MGAS8232).